Consider the following 88-residue polypeptide: Probable glutaredoxin ssr2061 (88 aa).

A disulfide bridge links Cys-15 with Cys-18.

This sequence belongs to the glutaredoxin family.

Functionally, has a glutathione-disulfide oxidoreductase activity in the presence of NADPH and glutathione reductase. Reduces low molecular weight disulfides and proteins. The chain is Probable glutaredoxin ssr2061 from Synechocystis sp. (strain ATCC 27184 / PCC 6803 / Kazusa).